We begin with the raw amino-acid sequence, 561 residues long: Malto-oligosyltrehalose trehalohydrolase (561 aa).

253–258 (RLDAVH) contacts substrate. Aspartate 255 (nucleophile) is an active-site residue. Glutamate 286 functions as the Proton donor in the catalytic mechanism. Residues 311 to 315 (DDFHH) and 379 to 384 (HDQVGN) each bind substrate.

Belongs to the glycosyl hydrolase 13 family. As to quaternary structure, homodimer.

It localises to the cytoplasm. It catalyses the reaction hydrolysis of (1-&gt;4)-alpha-D-glucosidic linkage in 4-alpha-D-[(1-&gt;4)-alpha-D-glucanosyl]n trehalose to yield trehalose and (1-&gt;4)-alpha-D-glucan.. It functions in the pathway glycan biosynthesis; trehalose biosynthesis. This chain is Malto-oligosyltrehalose trehalohydrolase (treZ), found in Saccharolobus solfataricus (strain ATCC 35092 / DSM 1617 / JCM 11322 / P2) (Sulfolobus solfataricus).